The sequence spans 217 residues: Oxygen regulatory protein NreC (217 aa).

A Response regulatory domain is found at K2 to Y119. At D53 the chain carries 4-aspartylphosphate. In terms of domain architecture, HTH luxR-type spans T148–K213. Positions N172–T191 form a DNA-binding region, H-T-H motif.

Phosphorylated by NreB.

It is found in the cytoplasm. Member of the two-component regulatory system NreB/NreC involved in the control of dissimilatory nitrate/nitrite reduction in response to oxygen. Phosphorylated NreC binds to a GC-rich palindromic sequence at the promoters of the nitrate (narGHJI) and nitrite (nir) reductase operons, as well as the putative nitrate transporter gene narT, and activates their expression. The chain is Oxygen regulatory protein NreC (nreC) from Staphylococcus aureus (strain USA300 / TCH1516).